The following is a 418-amino-acid chain: Pentatricopeptide repeat-containing protein At2g18520, mitochondrial (418 aa).

The transit peptide at 1 to 14 (MTSSRLYLRFLRRF) directs the protein to the mitochondrion. PPR repeat units lie at residues 101–135 (TETFLSTLIRSYGRASMFDHAMKMFEEMDKLGTPR), 136–166 (TVVSFNALLAACLHSDLFERVPQLFDEFPQR), 173–207 (DKISYGMLIKSYCDSGKPEKAMEIMRDMEVKGVEV), 208–242 (TIIAFTTILGSLYKNGLVDEAESLWIEMVNKGCDL), 243–276 (DNTVYNVRLMNAAKESPERVKELMEEMSSVGLKP), 277–311 (DTVSYNYLMTAYCVKGMMSEAKKVYEGLEQPNAAT), 312–342 (FRTLIFHLCINGLYDQGLTVFKKSAIVHKIP), and 343–373 (DFKTCKHLTEGLVKNNRMEDARGVARIVKKK).

It belongs to the PPR family. P subfamily.

Its subcellular location is the mitochondrion. The chain is Pentatricopeptide repeat-containing protein At2g18520, mitochondrial from Arabidopsis thaliana (Mouse-ear cress).